Here is a 507-residue protein sequence, read N- to C-terminus: Carboxypeptidase sxa2 (507 aa).

Positions 1–22 (MLSLFLKSLFAIIIIELTIIHA) are cleaved as a signal peptide. Residues asparagine 38 and asparagine 45 are each glycosylated (N-linked (GlcNAc...) asparagine). The tract at residues 41–64 (SASSNQTVQPRQHAAPSSDRIKSL) is disordered. The active site involves serine 200. N-linked (GlcNAc...) asparagine glycosylation is found at asparagine 259, asparagine 260, and asparagine 300. Residue aspartate 434 is part of the active site. Residue asparagine 448 is glycosylated (N-linked (GlcNAc...) asparagine). Residue histidine 487 is part of the active site.

This sequence belongs to the peptidase S10 family.

It is found in the secreted. Functionally, involved in degradation or processing of the mating pheromones. Its loss causes a persistent response to the pheromones. It may be required for stabilization of enzymes that are essential for zygote formation. May degrade the mating pheromone P-factor. The polypeptide is Carboxypeptidase sxa2 (sxa2) (Schizosaccharomyces pombe (strain 972 / ATCC 24843) (Fission yeast)).